The following is a 252-amino-acid chain: MQIKRWFLNNSLRNYQYLLYDKSHAIVIDPLKSDIFAEFIAKNKLQLEAILITHKHGDHIAGVKKLLAIYLNAKVYAYTGNDLFKPDIYVKDGSFINLGFTSFRVMYIPGHIDDHVCFLFEQERALFCGDTLFNAGVGGVQAESADINQLYDSLVKITKLDGDIKPYPAHDYWLGNLDFALSILADDSYFNYYRNQVAELAAEDKPIVNLAEEAKLNIFIRAMSDKALLKALPDYSLGREMFVKLRQLKNNF.

Zn(2+) contacts are provided by H54, H56, D58, H59, H111, D130, and H170.

Belongs to the metallo-beta-lactamase superfamily. Glyoxalase II family. As to quaternary structure, monomer. Zn(2+) is required as a cofactor.

It catalyses the reaction an S-(2-hydroxyacyl)glutathione + H2O = a 2-hydroxy carboxylate + glutathione + H(+). It participates in secondary metabolite metabolism; methylglyoxal degradation; (R)-lactate from methylglyoxal: step 2/2. Thiolesterase that catalyzes the hydrolysis of S-D-lactoyl-glutathione to form glutathione and D-lactic acid. The sequence is that of Hydroxyacylglutathione hydrolase from Francisella tularensis subsp. tularensis (strain FSC 198).